Here is a 141-residue protein sequence, read N- to C-terminus: MQYAKPVTLNVEECDRLSFLPYLFGNDFLYAEAYVYALAQKMMPEYQGGFWHFIRLPDGGGYMMPDGDRFHLVNGENWFDRTVSADAAGIILTSLVINRQLWLYHDSGDVGLTQLYRMRDAQLWRHIEFHPECNAIYAALD.

Belongs to the antirestriction protein family.

The protein is Putative antirestriction protein YubI (yubI) of Escherichia coli (strain K12).